A 296-amino-acid polypeptide reads, in one-letter code: Cytidine deaminase (296 aa).

CMP/dCMP-type deaminase domains lie at 47–167 (TEAE…FGPK) and 186–296 (DSSD…VDPV). 88 to 90 (NLE) serves as a coordination point for substrate. Position 101 (histidine 101) interacts with Zn(2+). Glutamate 103 serves as the catalytic Proton donor. The Zn(2+) site is built by cysteine 128 and cysteine 131.

Belongs to the cytidine and deoxycytidylate deaminase family. In terms of assembly, homodimer. Zn(2+) serves as cofactor.

The enzyme catalyses cytidine + H2O + H(+) = uridine + NH4(+). It catalyses the reaction 2'-deoxycytidine + H2O + H(+) = 2'-deoxyuridine + NH4(+). Its function is as follows. This enzyme scavenges exogenous and endogenous cytidine and 2'-deoxycytidine for UMP synthesis. This Shewanella sp. (strain W3-18-1) protein is Cytidine deaminase.